The primary structure comprises 596 residues: Protein kinase C iota type (596 aa).

A compositionally biased stretch (polar residues) spans 1–12; that stretch reads MPTQRDSSTMSH. A disordered region spans residues 1-21; that stretch reads MPTQRDSSTMSHTVACGGGGD. Pro-2 carries the post-translational modification N-acetylproline. The required for interaction with RAB2 stretch occupies residues 2-28; that stretch reads PTQRDSSTMSHTVACGGGGDHSHQVRV. The interval 2 to 253 is regulatory domain; that stretch reads PTQRDSSTMS…KASSSLGLQD (252 aa). The residue at position 3 (Thr-3) is a Phosphothreonine. Phosphoserine is present on residues Ser-7 and Ser-8. Thr-9 is modified (phosphothreonine). The PB1 domain maps to 25 to 108; that stretch reads QVRVKAYYRG…SELLIHVFPC (84 aa). An interaction with PARD6A region spans residues 72 to 91; that stretch reads DEEGDPCTVSSQLELEEAFR. The short motif at 125-134 is the Pseudosubstrate element; that stretch reads YRRGARRWRK. The segment at 140–190 adopts a Phorbol-ester/DAG-type zinc-finger fold; sequence GHTFQAKRFNRRAHCAICTDRIWGLGRQGYKCINCKLLVHKKCHKLVTIEC. Residues 254–522 form the Protein kinase domain; it reads FDLLRVIGRG…FADIQGHPFF (269 aa). Position 260–268 (260–268) interacts with ATP; the sequence is IGRGSYAKV. Tyr-265 and Tyr-280 each carry phosphotyrosine; by SRC. Lys-283 is a binding site for ATP. Phosphotyrosine; by SRC is present on Tyr-334. The Proton acceptor role is filled by Asp-378. The residue at position 412 (Thr-412) is a Phosphothreonine; by PDPK1. In terms of domain architecture, AGC-kinase C-terminal spans 523–594; the sequence is RNVDWDMMEQ…INPLLMSAEE (72 aa). The residue at position 564 (Thr-564) is a Phosphothreonine.

It belongs to the protein kinase superfamily. AGC Ser/Thr protein kinase family. PKC subfamily. In terms of assembly, forms a complex with SQSTM1 and MP2K5. Interacts directly with SQSTM1. Interacts with IKBKB. Interacts with PARD6A, PARD6B and PARD6G. Part of a quaternary complex containing aPKC, PARD3, a PARD6 protein (PARD6A, PARD6B or PARD6G) and a GTPase protein (CDC42 or RAC1). Part of a complex with LLGL1 and PARD6B. Interacts with ADAP1/CENTA1. Interaction with SMG1, through the ZN-finger domain, activates the kinase activity. Interacts with CDK7. Forms a complex with RAB2A and GAPDH involved in recruitment onto the membrane of vesicular tubular clusters (VTCs). Interacts with ECT2 ('Thr-359' phosphorylated form). Interacts with VAMP2. Interacts with WDFY2 (via WD repeats 1-3). Post-translationally, phosphorylation at Thr-412 in the activation loop is not mandatory for activation. Upon neuronal growth factor (NGF) stimulation, phosphorylated by SRC at Tyr-265, Tyr-280 and Tyr-334. Phosphorylation at Tyr-265 facilitates binding to KPNB1/importin-beta regulating entry of PRKCI into the nucleus. Phosphorylation on Tyr-334 is important for NF-kappa-B stimulation. Phosphorylated at Thr-564 during the initial phase of long term potentiation. As to expression, expressed in dorsal hippocampus (at protein level).

The protein localises to the cytoplasm. It is found in the membrane. It localises to the endosome. Its subcellular location is the nucleus. It catalyses the reaction L-seryl-[protein] + ATP = O-phospho-L-seryl-[protein] + ADP + H(+). The catalysed reaction is L-threonyl-[protein] + ATP = O-phospho-L-threonyl-[protein] + ADP + H(+). Its activity is regulated as follows. Atypical PKCs (PRKCI and PRKCZ) exhibit an elevated basal enzymatic activity (that may be due to the interaction with SMG1 or SQSTM1) and are not regulated by diacylglycerol, phosphatidylserine, phorbol esters or calcium ions. Two specific sites, Thr-412 (activation loop of the kinase domain) and Thr-564 (turn motif), need to be phosphorylated for its full activation. Might also be a target for novel lipid activators that are elevated during nutrient-stimulated insulin secretion. Functionally, calcium- and diacylglycerol-independent serine/ threonine-protein kinase that plays a general protective role against apoptotic stimuli, is involved in NF-kappa-B activation, cell survival, differentiation and polarity, and contributes to the regulation of microtubule dynamics in the early secretory pathway. Is necessary for BCR-ABL oncogene-mediated resistance to apoptotic drug in leukemia cells, protecting leukemia cells against drug-induced apoptosis. In cultured neurons, prevents amyloid beta protein-induced apoptosis by interrupting cell death process at a very early step. In glioblastoma cells, may function downstream of phosphatidylinositol 3-kinase (PI3K) and PDPK1 in the promotion of cell survival by phosphorylating and inhibiting the pro-apoptotic factor BAD. Can form a protein complex in non-small cell lung cancer (NSCLC) cells with PARD6A and ECT2 and regulate ECT2 oncogenic activity by phosphorylation, which in turn promotes transformed growth and invasion. In response to nerve growth factor (NGF), acts downstream of SRC to phosphorylate and activate IRAK1, allowing the subsequent activation of NF-kappa-B and neuronal cell survival. Functions in the organization of the apical domain in epithelial cells by phosphorylating EZR. This step is crucial for activation and normal distribution of EZR at the early stages of intestinal epithelial cell differentiation. Forms a protein complex with LLGL1 and PARD6B independently of PARD3 to regulate epithelial cell polarity. Plays a role in microtubule dynamics in the early secretory pathway through interaction with RAB2A and GAPDH and recruitment to vesicular tubular clusters (VTCs). In human coronary artery endothelial cells (HCAEC), is activated by saturated fatty acids and mediates lipid-induced apoptosis. Downstream of PI3K is required for insulin-stimulated glucose transport. Activates RAB4A and promotes its association with KIF3A which is required for the insulin-induced SLC2A4/GLUT4 translocation in adipocytes. Is essential in early embryogenesis and development of differentiating photoreceptors by playing a role in the establishment of epithelial and neuronal polarity. Involved in early synaptic long term potentiation phase in CA1 hippocampal cells and short term memory formation. The polypeptide is Protein kinase C iota type (Prkci) (Rattus norvegicus (Rat)).